Here is a 147-residue protein sequence, read N- to C-terminus: Large ribosomal subunit protein bL9 (147 aa).

It belongs to the bacterial ribosomal protein bL9 family.

Its function is as follows. Binds to the 23S rRNA. In Campylobacter hominis (strain ATCC BAA-381 / DSM 21671 / CCUG 45161 / LMG 19568 / NCTC 13146 / CH001A), this protein is Large ribosomal subunit protein bL9.